We begin with the raw amino-acid sequence, 312 residues long: uncharacterized protein (312 aa).

One can recognise an HTH lysR-type domain in the interval 8-65 (PGLTCFEIFLAIAEAGSLGGAARELGLTQQAVSRRLASMEAQIGVRLAIRTTRGSQLT). A DNA-binding region (H-T-H motif) is located at residues 25–45 (LGGAARELGLTQQAVSRRLAS).

Belongs to the LysR transcriptional regulatory family.

This is an uncharacterized protein from Mycobacterium tuberculosis (strain CDC 1551 / Oshkosh).